A 301-amino-acid chain; its full sequence is MFESNMVLQTLSSSSPPIHRLYLHHSQILPSSGSPSKISLQIHGRTLAIRSFHDYVFAEISARGLPALNKASLKKLPIKGSTFLLGQSLLMVSAHPQLAAAAEIIKPEPIYEVGELFELSIQLSYLLLLLGLLGVGTFYVIRQVLVRRELDLSAKELQEQVRSGDASATELFELGAVMLRRKFYPAANKFLQQAIQKWDGDDQDLAQVYNALGVSYVREDKLDKGIAQFEMAVKLQPGYVTAWNNLGDAYEKKKELPLALNAFEEVLLFDPNNKVARPRRDALKDRVKLYKGVVAVKSKKR.

The transit peptide at 1-61 (MFESNMVLQT…FHDYVFAEIS (61 aa)) directs the protein to the chloroplast. A run of 2 helical transmembrane segments spans residues 82–102 (TFLLGQSLLMVSAHPQLAAAA) and 121–141 (IQLSYLLLLLGLLGVGTFYVI). 3 TPR repeats span residues 168-201 (ATELFELGAVMLRRKFYPAANKFLQQAIQKWDGD), 206-239 (AQVYNALGVSYVREDKLDKGIAQFEMAVKLQPGY), and 240-273 (VTAWNNLGDAYEKKKELPLALNAFEEVLLFDPNN).

Interacts with PSA3.

The protein resides in the plastid. It localises to the chloroplast thylakoid membrane. Functionally, nuclear genome-encoded factor required for the accumulation of photosystem I (PSI). Functions as a PSI biogenesis factor. Cooperates with PSA3 to promote the stable assembly of PSI in the thylakoid membrane. May target primarily the PsaC subunit. In Arabidopsis thaliana (Mouse-ear cress), this protein is Tetratricopeptide repeat domain-containing protein PYG7, chloroplastic.